We begin with the raw amino-acid sequence, 88 residues long: Small ribosomal subunit protein uS15 (88 aa).

It belongs to the universal ribosomal protein uS15 family. Part of the 30S ribosomal subunit. Forms a bridge to the 50S subunit in the 70S ribosome, contacting the 23S rRNA.

Its function is as follows. One of the primary rRNA binding proteins, it binds directly to 16S rRNA where it helps nucleate assembly of the platform of the 30S subunit by binding and bridging several RNA helices of the 16S rRNA. Functionally, forms an intersubunit bridge (bridge B4) with the 23S rRNA of the 50S subunit in the ribosome. This is Small ribosomal subunit protein uS15 from Leptospira borgpetersenii serovar Hardjo-bovis (strain JB197).